The chain runs to 25 residues: MREAICIHIGQAGYQIGNACSQLFC.

Residue Q11 participates in GTP binding.

It belongs to the tubulin family. As to quaternary structure, dimer of alpha and beta chains. A typical microtubule is a hollow water-filled tube with an outer diameter of 25 nm and an inner diameter of 15 nM. Alpha-beta heterodimers associate head-to-tail to form protofilaments running lengthwise along the microtubule wall with the beta-tubulin subunit facing the microtubule plus end conferring a structural polarity. Microtubules usually have 13 protofilaments but different protofilament numbers can be found in some organisms and specialized cells. Requires Mg(2+) as cofactor.

The protein resides in the cytoplasm. The protein localises to the cytoskeleton. It catalyses the reaction GTP + H2O = GDP + phosphate + H(+). In terms of biological role, tubulin is the major constituent of microtubules, a cylinder consisting of laterally associated linear protofilaments composed of alpha- and beta-tubulin heterodimers. Microtubules grow by the addition of GTP-tubulin dimers to the microtubule end, where a stabilizing cap forms. Below the cap, tubulin dimers are in GDP-bound state, owing to GTPase activity of alpha-tubulin. The sequence is that of Tubulin alpha chain from Leptomonas seymouri.